The sequence spans 359 residues: Ornithine carbamoyltransferase, mitochondrial (359 aa).

The transit peptide at 1 to 24 (MASLRSVLKSQSLRHTVRSYSSQT) directs the protein to the mitochondrion. Carbamoyl phosphate-binding positions include 87–90 (STRT), Arg138, His165, and Gln168. L-ornithine-binding residues include Asn205, Asp271, Ser275, and Met276. Cys313 (proton acceptor) is an active-site residue. Residues 313-314 (CL) and Arg340 contribute to the carbamoyl phosphate site.

The protein belongs to the aspartate/ornithine carbamoyltransferase superfamily. OTCase family. As to quaternary structure, homotrimer.

The protein resides in the mitochondrion matrix. The enzyme catalyses carbamoyl phosphate + L-ornithine = L-citrulline + phosphate + H(+). It participates in amino-acid biosynthesis; L-arginine biosynthesis; L-arginine from L-ornithine and carbamoyl phosphate: step 1/3. In Emericella nidulans (strain FGSC A4 / ATCC 38163 / CBS 112.46 / NRRL 194 / M139) (Aspergillus nidulans), this protein is Ornithine carbamoyltransferase, mitochondrial (argB).